The chain runs to 244 residues: 5-oxoprolinase subunit A (244 aa).

The protein belongs to the LamB/PxpA family. Forms a complex composed of PxpA, PxpB and PxpC.

It catalyses the reaction 5-oxo-L-proline + ATP + 2 H2O = L-glutamate + ADP + phosphate + H(+). In terms of biological role, catalyzes the cleavage of 5-oxoproline to form L-glutamate coupled to the hydrolysis of ATP to ADP and inorganic phosphate. This is 5-oxoprolinase subunit A from Shigella boydii serotype 18 (strain CDC 3083-94 / BS512).